The chain runs to 361 residues: Mitogen-activated protein kinase 14 (361 aa).

Residues Y25–F309 form the Protein kinase domain. ATP contacts are provided by residues V31–V39 and K54. Residue D151 is the Proton acceptor of the active site. T181 carries the phosphothreonine modification. Positions T181 to Y183 match the TXY motif. Y183 carries the post-translational modification Phosphotyrosine.

It belongs to the protein kinase superfamily. CMGC Ser/Thr protein kinase family. MAP kinase subfamily. Requires Mg(2+) as cofactor. Post-translationally, dually phosphorylated on Thr-181 and Tyr-183, which activates the enzyme.

The enzyme catalyses L-seryl-[protein] + ATP = O-phospho-L-seryl-[protein] + ADP + H(+). The catalysed reaction is L-threonyl-[protein] + ATP = O-phospho-L-threonyl-[protein] + ADP + H(+). With respect to regulation, activated by tyrosine and threonine phosphorylation. Functionally, serine/threonine kinase which acts as an essential component of the MAP kinase signal transduction pathway. mapk14a is one of the four p38 MAPKs which play an important role in the cascades of cellular responses evoked by extracellular stimuli such as pro-inflammatory cytokines or physical stress leading to direct activation of transcription factors. Accordingly, p38 MAPKs phosphorylate a broad range of proteins and it has been estimated that they may have approximately 200 to 300 substrates each. Some of the targets are downstream kinases which are activated through phosphorylation and further phosphorylate additional targets. MPK2 is activated by upstream MAPKK/MAPKKK and stimulates MAPKAP kinase 2 to phosphorylate small heat shock proteins. Does not phosphorylate myelin basic protein or MAPKAP kinase 1. This chain is Mitogen-activated protein kinase 14 (mapk14), found in Xenopus laevis (African clawed frog).